Here is a 476-residue protein sequence, read N- to C-terminus: Protein transport protein Sec61 subunit alpha (476 aa).

The Cytoplasmic segment spans residues 2-33; it reads GIKFLEVIKPFCAVLPEIQKPERKIQFREKVL. Residues 34-53 form a helical membrane-spanning segment; it reads WTAITLFIFLVCCQIPLFGI. The Lumenal segment spans residues 54–76; it reads MSSDSADPFYWMRVILASNRGTL. The helical transmembrane segment at 77–96 threads the bilayer; that stretch reads MELGISPIVTSGLIMQLLAG. Topologically, residues 97-117 are cytoplasmic; it reads AKIIEVGDTPKDRALFNGAQK. Residues 118 to 138 traverse the membrane as a helical segment; it reads LFGMIITIGQAIVYVMTGMYG. The Lumenal segment spans residues 139-144; that stretch reads DPSEMG. A helical membrane pass occupies residues 145–165; the sequence is AGICLVIIIQLFVAGLIVLLL. The Cytoplasmic segment spans residues 166–172; it reads DELLQKG. The chain crosses the membrane as a helical span at residues 173–193; sequence YGLGSGISLFIATNICETIVW. Topologically, residues 194–240 are lumenal; the sequence is KAFSPTTVNTGRGTEFEGAIIALFHLLATRTDKVRALREAFYRQNLP. The helical transmembrane segment at 241–261 threads the bilayer; the sequence is NLMNLIATVFVFAVVIYFQGF. Residues 262-288 lie on the Cytoplasmic side of the membrane; it reads RVDLPIKSARYRGQYNTYPIKLFYTSN. The chain crosses the membrane as a helical span at residues 289–309; that stretch reads IPIILQSALVSNLYVISQMLS. At 310–354 the chain is on the lumenal side; the sequence is TRFSGNFLVNLLGTWSDTSTGGPARAYPVGGLCYYFSPPESFGSV. Residues 355–375 traverse the membrane as a helical segment; that stretch reads LDDPVHASIYIVFMLGSCAFF. Residues 376–420 lie on the Cytoplasmic side of the membrane; sequence SKTWIEVSGSSAKDVAKQLKEQQMVMRGHRETSMVHELNRYIPTA. The chain crosses the membrane as a helical span at residues 421–441; it reads AAFGGLCIGGLSVMADFLGAI. Residues 442–445 lie on the Lumenal side of the membrane; it reads GSGT. Residues 446–462 form a helical membrane-spanning segment; it reads GILLAVTIIYQYFEIFV. Topologically, residues 463-476 are cytoplasmic; it reads KEQSEMGSMGALLF.

The protein belongs to the SecY/SEC61-alpha family. As to quaternary structure, the SEC61 channel-forming translocon complex consists of channel-forming core components SEC61A1, SEC61B and SEC61G and different auxiliary components such as SEC62 and SEC63. The SEC61 channel associates with the multi-pass translocon (MPT) complex.

It localises to the endoplasmic reticulum membrane. Component of SEC61 channel-forming translocon complex that mediates transport of signal peptide-containing precursor polypeptides across the endoplasmic reticulum (ER). Forms a ribosome receptor and a gated pore in the ER membrane, both functions required for cotranslational translocation of nascent polypeptides. May cooperate with auxiliary protein SEC62, SEC63 and HSPA5/BiP to enable post-translational transport of small presecretory proteins. The SEC61 channel is also involved in ER membrane insertion of transmembrane proteins: it mediates membrane insertion of the first few transmembrane segments of proteins, while insertion of subsequent transmembrane regions of multi-pass membrane proteins is mediated by the multi-pass translocon (MPT) complex. This chain is Protein transport protein Sec61 subunit alpha (sec61a), found in Gadus ogac (Greenland cod).